The chain runs to 334 residues: MSKKNITIIGTGAYGTALANVLADNDNNVIMYGIVEQQVDDINIYHQNSVFFDNKKINKTIRATNSMAAALENTDILILGVPTAAIKHVVNDIIKYAKKPMDIINTAKGLDEENLGLLSDKIKKYFEGSNVISTYSALYGPSIAIEVVDRQPTAIMIASETIEKAKELCNVFSNEYFYMYPTTDIAGCEISAALKNAIAIGGGILKAYNAGDNAHATLLTLGLNEMYEFGKHFGAKLETFLNFAGLGDLILTASSKKSRNFRLGERIVELNDAKKALESFNLTVEGVETARIAHEIGVKYQISMNFFEIIYNILYNNVKPISLLNNVFRDVKLV.

NADPH contacts are provided by Tyr-14 and Lys-108. The sn-glycerol 3-phosphate site is built by Lys-108, Gly-140, and Ser-142. An NADPH-binding site is contributed by Ala-144. 5 residues coordinate sn-glycerol 3-phosphate: Lys-195, Asp-248, Ser-258, Arg-259, and Asn-260. Lys-195 acts as the Proton acceptor in catalysis. Arg-259 provides a ligand contact to NADPH. Glu-285 contacts NADPH.

It belongs to the NAD-dependent glycerol-3-phosphate dehydrogenase family.

The protein localises to the cytoplasm. It catalyses the reaction sn-glycerol 3-phosphate + NAD(+) = dihydroxyacetone phosphate + NADH + H(+). It carries out the reaction sn-glycerol 3-phosphate + NADP(+) = dihydroxyacetone phosphate + NADPH + H(+). It participates in membrane lipid metabolism; glycerophospholipid metabolism. In terms of biological role, catalyzes the reduction of the glycolytic intermediate dihydroxyacetone phosphate (DHAP) to sn-glycerol 3-phosphate (G3P), the key precursor for phospholipid synthesis. The sequence is that of Glycerol-3-phosphate dehydrogenase [NAD(P)+] from Mesoplasma florum (strain ATCC 33453 / NBRC 100688 / NCTC 11704 / L1) (Acholeplasma florum).